A 61-amino-acid chain; its full sequence is Large ribosomal subunit protein uL30 (61 aa).

The protein belongs to the universal ribosomal protein uL30 family. Part of the 50S ribosomal subunit.

The chain is Large ribosomal subunit protein uL30 from Oenococcus oeni (strain ATCC BAA-331 / PSU-1).